A 283-amino-acid polypeptide reads, in one-letter code: Diphthine methyl ester synthase (283 aa).

Residues L9, D84, G87, 112–113, L163, M221, and H246 each bind S-adenosyl-L-methionine; that span reads SI.

This sequence belongs to the diphthine synthase family.

It localises to the cytoplasm. The enzyme catalyses 2-[(3S)-amino-3-carboxypropyl]-L-histidyl-[translation elongation factor 2] + 4 S-adenosyl-L-methionine = diphthine methyl ester-[translation elongation factor 2] + 4 S-adenosyl-L-homocysteine + 3 H(+). It functions in the pathway protein modification; peptidyl-diphthamide biosynthesis. Its function is as follows. S-adenosyl-L-methionine-dependent methyltransferase that catalyzes four methylations of the modified target histidine residue in translation elongation factor 2 (EF-2), to form an intermediate called diphthine methyl ester. The four successive methylation reactions represent the second step of diphthamide biosynthesis. The polypeptide is Diphthine methyl ester synthase (dph5) (Schizosaccharomyces pombe (strain 972 / ATCC 24843) (Fission yeast)).